Here is a 95-residue protein sequence, read N- to C-terminus: Acylphosphatase (95 aa).

The Acylphosphatase-like domain occupies 7–95; the sequence is RLTAWVLGTV…PKGEVGFRTR (89 aa). Active-site residues include arginine 22 and asparagine 40.

It belongs to the acylphosphatase family.

The catalysed reaction is an acyl phosphate + H2O = a carboxylate + phosphate + H(+). The sequence is that of Acylphosphatase (acyP) from Corynebacterium diphtheriae (strain ATCC 700971 / NCTC 13129 / Biotype gravis).